We begin with the raw amino-acid sequence, 288 residues long: S-methyl-5'-thioadenosine phosphorylase (288 aa).

Residues Ser-12, 54–55 (RH), and 87–88 (SA) contribute to the phosphate site. Met-186 is a substrate binding site. Thr-187 contacts phosphate. A substrate-binding site is contributed by 210-212 (DYD).

Belongs to the PNP/MTAP phosphorylase family. MTAP subfamily. In terms of assembly, homohexamer. Dimer of a homotrimer.

The catalysed reaction is S-methyl-5'-thioadenosine + phosphate = 5-(methylsulfanyl)-alpha-D-ribose 1-phosphate + adenine. Its pathway is amino-acid biosynthesis; L-methionine biosynthesis via salvage pathway; S-methyl-5-thio-alpha-D-ribose 1-phosphate from S-methyl-5'-thioadenosine (phosphorylase route): step 1/1. Catalyzes the reversible phosphorylation of S-methyl-5'-thioadenosine (MTA) to adenine and 5-methylthioribose-1-phosphate. Involved in the breakdown of MTA, a major by-product of polyamine biosynthesis. Responsible for the first step in the methionine salvage pathway after MTA has been generated from S-adenosylmethionine. Has broad substrate specificity with 6-aminopurine nucleosides as preferred substrates. This chain is S-methyl-5'-thioadenosine phosphorylase, found in Chloroflexus aurantiacus (strain ATCC 29366 / DSM 635 / J-10-fl).